Reading from the N-terminus, the 279-residue chain is Protein phosphatase 1 regulatory subunit 3E (279 aa).

A phosphoserine mark is found at S16 and S33. The segment at 28 to 89 is disordered; the sequence is RSQRPSLEEE…RSPDTRKRVR (62 aa). Basic residues predominate over residues 51-65; that stretch reads ARSRAHVPGRGRRAR. S66 carries the phosphoserine modification. The PP1-binding motif signature appears at 87–90; the sequence is RVRF. The 106-residue stretch at 154–259 folds into the CBM21 domain; the sequence is AARLQAQRIC…NNGGRDYALL (106 aa). Positions 176–198 are glycogen-binding motif; it reads GSARVLDLAYEKRVSVRWSADGW. The substrate-binding motif stretch occupies residues 248-256; it reads WDNNGGRDY.

Expressed in liver and heart, with low levels in skeletal muscle.

Acts as a glycogen-targeting subunit for PP1. PP1 is involved in glycogen metabolism and contributes to the activation of glycogen synthase leading to an increase in glycogen synthesis. This chain is Protein phosphatase 1 regulatory subunit 3E (Ppp1r3e), found in Rattus norvegicus (Rat).